Here is a 124-residue protein sequence, read N- to C-terminus: Large ribosomal subunit protein bL12 (124 aa).

This sequence belongs to the bacterial ribosomal protein bL12 family. Homodimer. Part of the ribosomal stalk of the 50S ribosomal subunit. Forms a multimeric L10(L12)X complex, where L10 forms an elongated spine to which 2 to 4 L12 dimers bind in a sequential fashion. Binds GTP-bound translation factors.

Forms part of the ribosomal stalk which helps the ribosome interact with GTP-bound translation factors. Is thus essential for accurate translation. In Nitrosomonas europaea (strain ATCC 19718 / CIP 103999 / KCTC 2705 / NBRC 14298), this protein is Large ribosomal subunit protein bL12.